We begin with the raw amino-acid sequence, 757 residues long: Cap-specific mRNA (nucleoside-2'-O-)-methyltransferase 1 (757 aa).

Residues 1 to 61 are disordered; sequence MFQSNQYDEY…EDDEEEEDTP (61 aa). 2 stretches are compositionally biased toward acidic residues: residues 18–32 and 40–59; these read EENESNENENENENE and GDQDSEDSFIYEEDDEEEED. A G-patch domain is found at 62–108; the sequence is KLSFGAKFLAKHGHIEGQGLGKEKDGRIDLIEVDRFQSTKGLGFAEN. In terms of domain architecture, RrmJ-type SAM-dependent 2'-O-MTase spans 214 to 438; the sequence is IFINRAAVKM…ERYIICKNFL (225 aa). Residues Gly-257, Glu-301, and Asp-352 each contribute to the S-adenosyl-L-methionine site. Lys-392 serves as the catalytic Proton acceptor. Residues 538-548 show a composition bias toward basic residues; that stretch reads HKNRQKHHHNN. The tract at residues 538-670 is disordered; that stretch reads HKNRQKHHHN…NNNNNNNNKN (133 aa). Positions 549 to 569 are enriched in low complexity; sequence HSNNNNNNNNSNNNNNNNNQH. Residues 570–581 are compositionally biased toward basic residues; it reads QHQHHQHQHHQN. Residues 597–668 are compositionally biased toward low complexity; that stretch reads NNNINNNSNN…NNNNNNNNNN (72 aa).

It catalyses the reaction a 5'-end (N(7)-methyl 5'-triphosphoguanosine)-ribonucleoside in mRNA + S-adenosyl-L-methionine = a 5'-end (N(7)-methyl 5'-triphosphoguanosine)-(2'-O-methyl-ribonucleoside) in mRNA + S-adenosyl-L-homocysteine + H(+). Its function is as follows. S-adenosyl-L-methionine-dependent methyltransferase that mediates mRNA cap1 2'-O-ribose methylation to the 5'-cap structure of mRNAs. Methylates the ribose of the first nucleotide of a m(7)GpppG-capped mRNA to produce m(7)GpppNmp (cap1). Cap1 modification is linked to higher levels of translation. The chain is Cap-specific mRNA (nucleoside-2'-O-)-methyltransferase 1 from Dictyostelium discoideum (Social amoeba).